A 150-amino-acid polypeptide reads, in one-letter code: Arginine repressor (150 aa).

It belongs to the ArgR family.

The protein resides in the cytoplasm. Its pathway is amino-acid biosynthesis; L-arginine biosynthesis [regulation]. In terms of biological role, regulates arginine biosynthesis genes. This chain is Arginine repressor, found in Clostridium botulinum (strain Loch Maree / Type A3).